The chain runs to 304 residues: ATP synthase gamma chain (304 aa).

Belongs to the ATPase gamma chain family. In terms of assembly, F-type ATPases have 2 components, CF(1) - the catalytic core - and CF(0) - the membrane proton channel. CF(1) has five subunits: alpha(3), beta(3), gamma(1), delta(1), epsilon(1). CF(0) has three main subunits: a, b and c.

The protein localises to the cell membrane. Its function is as follows. Produces ATP from ADP in the presence of a proton gradient across the membrane. The gamma chain is believed to be important in regulating ATPase activity and the flow of protons through the CF(0) complex. The chain is ATP synthase gamma chain from Mycolicibacterium paratuberculosis (strain ATCC BAA-968 / K-10) (Mycobacterium paratuberculosis).